We begin with the raw amino-acid sequence, 376 residues long: Glutamate 5-kinase (376 aa).

K15 lines the ATP pocket. Residues S55, D141, and N153 each coordinate substrate. Residues 173–174 and 215–221 contribute to the ATP site; these read SD and TGGMQTK. A PUA domain is found at 280–361; it reads AGRLTVDAGA…HAIAEVLDEA (82 aa).

Belongs to the glutamate 5-kinase family.

Its subcellular location is the cytoplasm. The enzyme catalyses L-glutamate + ATP = L-glutamyl 5-phosphate + ADP. The protein operates within amino-acid biosynthesis; L-proline biosynthesis; L-glutamate 5-semialdehyde from L-glutamate: step 1/2. Its function is as follows. Catalyzes the transfer of a phosphate group to glutamate to form L-glutamate 5-phosphate. This Salinibacter ruber (strain DSM 13855 / M31) protein is Glutamate 5-kinase.